The primary structure comprises 697 residues: Zinc finger protein 12 (697 aa).

Residue Lys-3 forms a Glycyl lysine isopeptide (Lys-Gly) (interchain with G-Cter in SUMO2) linkage. Residues 8–79 (VSFKDVAVDF…EGEFLLQSYP (72 aa)) enclose the KRAB domain. Residues Lys-98, Lys-179, Lys-182, Lys-209, Lys-215, Lys-224, Lys-239, and Lys-267 each participate in a glycyl lysine isopeptide (Lys-Gly) (interchain with G-Cter in SUMO2) cross-link. 2 C2H2-type zinc fingers span residues 269–291 (YECSECGKSFCKKSKFIIHQRTH) and 297–319 (YECNQCGKSFCQKGTLTVHQRTH). Residues Lys-309, Lys-323, Lys-337, and Lys-365 each participate in a glycyl lysine isopeptide (Lys-Gly) (interchain with G-Cter in SUMO2) cross-link. C2H2-type zinc fingers lie at residues 325 to 347 (YECNECGKNFYQKLHLIQHQRTH), 353 to 375 (YECSYCGKSFCQKTHLTQHQRTH), 381 to 403 (YVCHDCGKTFSQKSALNDHQKIH), 409 to 431 (YKCSECGKCFCRKSTLTTHLRTH), 437 to 459 (YECNECGKFFSRLSYLTVHYRTH), 465 to 487 (YECNECGKTFYLNSALMRHQRVH), 493 to 515 (YECNECGKLFSQLSYLTIHHRTH), and 521 to 543 (YECSECGKTFYQNSALCRHRRIH). Glycyl lysine isopeptide (Lys-Gly) (interchain with G-Cter in SUMO2) cross-links involve residues Lys-544 and Lys-547. C2H2-type zinc fingers lie at residues 549–571 (YECYICGKFFSQMSYLTIHHRIH), 577–599 (YECSECGKTFCQNSALNRHQRTH), 605–627 (YECYECGKCFSQMSYLTIHHRIH), 633–655 (FECNECGKAFSRMSYLTVHYRTH), and 661–683 (YECTECGKKFYHKSAFNSHQRIH).

Belongs to the krueppel C2H2-type zinc-finger protein family. As to expression, widely expressed in various adult tissues and embryonic developmental stages (isoform 3).

The protein localises to the nucleus. Transcriptional repressor which suppresses activation protein 1 (AP-1)- and serum response element (SRE)-mediated transcriptional activity. The protein is Zinc finger protein 12 (ZNF12) of Homo sapiens (Human).